A 173-amino-acid chain; its full sequence is Dual-action ribosomal maturation protein DarP (173 aa).

Belongs to the DarP family.

It is found in the cytoplasm. Member of a network of 50S ribosomal subunit biogenesis factors which assembles along the 30S-50S interface, preventing incorrect 23S rRNA structures from forming. Promotes peptidyl transferase center (PTC) maturation. The protein is Dual-action ribosomal maturation protein DarP of Pseudomonas syringae pv. tomato (strain ATCC BAA-871 / DC3000).